The sequence spans 427 residues: Serine hydroxymethyltransferase (427 aa).

Residues Leu122 and 126 to 128 contribute to the (6S)-5,6,7,8-tetrahydrofolate site; that span reads GHL. At Lys231 the chain carries N6-(pyridoxal phosphate)lysine. Residue 355–357 coordinates (6S)-5,6,7,8-tetrahydrofolate; it reads SPF.

It belongs to the SHMT family. As to quaternary structure, homodimer. Pyridoxal 5'-phosphate is required as a cofactor.

It localises to the cytoplasm. The enzyme catalyses (6R)-5,10-methylene-5,6,7,8-tetrahydrofolate + glycine + H2O = (6S)-5,6,7,8-tetrahydrofolate + L-serine. It functions in the pathway one-carbon metabolism; tetrahydrofolate interconversion. It participates in amino-acid biosynthesis; glycine biosynthesis; glycine from L-serine: step 1/1. Catalyzes the reversible interconversion of serine and glycine with tetrahydrofolate (THF) serving as the one-carbon carrier. This reaction serves as the major source of one-carbon groups required for the biosynthesis of purines, thymidylate, methionine, and other important biomolecules. Also exhibits THF-independent aldolase activity toward beta-hydroxyamino acids, producing glycine and aldehydes, via a retro-aldol mechanism. In Nostoc sp. (strain PCC 7120 / SAG 25.82 / UTEX 2576), this protein is Serine hydroxymethyltransferase.